The following is a 241-amino-acid chain: Uridylate kinase (241 aa).

Lys12 to Gly15 serves as a coordination point for ATP. The segment at Gly20–Gly25 is involved in allosteric activation by GTP. Gly54 lines the UMP pocket. ATP contacts are provided by Gly55 and Arg59. UMP contacts are provided by residues Asp74 and Thr135 to Thr142. Residues Asn163, Tyr169, and Asp172 each coordinate ATP.

The protein belongs to the UMP kinase family. Homohexamer.

The protein localises to the cytoplasm. The catalysed reaction is UMP + ATP = UDP + ADP. The protein operates within pyrimidine metabolism; CTP biosynthesis via de novo pathway; UDP from UMP (UMPK route): step 1/1. Allosterically activated by GTP. Inhibited by UTP. In terms of biological role, catalyzes the reversible phosphorylation of UMP to UDP. This Pediococcus pentosaceus (strain ATCC 25745 / CCUG 21536 / LMG 10740 / 183-1w) protein is Uridylate kinase.